We begin with the raw amino-acid sequence, 359 residues long: MILMRRTLKAAILGATGLVGIEYVRMLSNHPYIKPAYLAGKGSVGKPYGEVVRWQTVGQVPKEIADMEIKPTDPKLMDDVDIIFSPLPQGAAGPVEEQFAKEGFPVISNSPDHRFDPDVPLLVPELNPHTISLIDEQRKRREWKGFIVTTPLCTAQGAAIPLGAIFKDYKMDGAFITTIQSLSGAGYPGIPSLDVVDNILPLGDGYDAKTIKEIFRILSEVKRNVDEPKLEDVSLAATTHRIATIHGHYEVLYVSFKEETAAEKVKETLENFRGEPQDLKLPTAPSKPIIVMNEDTRPQVYFDRWAGDIPGMSVVVGRLKQVNKRMIRLVSLIHNTVRGAAGGGILAAELLVEKGYIEK.

NADP(+) is bound at residue 16–19; that stretch reads TGLV. Catalysis depends on C153, which acts as the Acyl-thioester intermediate. Residue 183–184 coordinates NADP(+); that stretch reads SG. H248 acts as the Proton acceptor in catalysis. Residue 335-336 coordinates NADP(+); sequence NT.

This sequence belongs to the aspartate-semialdehyde dehydrogenase family. As to quaternary structure, homodimer and possibly a tetramer. It depends on Mg(2+) as a cofactor. Mn(2+) is required as a cofactor.

It catalyses the reaction 3-oxopropanoate + NADP(+) + CoA = malonyl-CoA + NADPH + H(+). With respect to regulation, activated by dithioerythritol (5 mM) and inhibited by the thiol-blocking agent iodoacetamide (0.1 mM). Catalyzes the reduction of malonyl-CoA to malonate semialdehyde, a key step in the 3-hydroxypropanoate and the 3-hydroxypropanoate/4-hydroxybutyrate cycles. Can also use succinyl-CoA and succinate semialdehyde as substrates but at a lower rate than malonyl-CoA. The chain is Malonyl-CoA reductase (mcr) from Sulfurisphaera tokodaii (strain DSM 16993 / JCM 10545 / NBRC 100140 / 7) (Sulfolobus tokodaii).